The following is a 173-amino-acid chain: dCTP deaminase, dUMP-forming (173 aa).

Residues 93–98 (RSSIGR), Asp111, 119–121 (TLE), Gln138, and Tyr151 each bind dCTP. The Proton donor/acceptor role is filled by Glu121.

It belongs to the dCTP deaminase family. Homotrimer.

It catalyses the reaction dCTP + 2 H2O = dUMP + NH4(+) + diphosphate. Its pathway is pyrimidine metabolism; dUMP biosynthesis; dUMP from dCTP: step 1/1. Functionally, bifunctional enzyme that catalyzes both the deamination of dCTP to dUTP and the hydrolysis of dUTP to dUMP without releasing the toxic dUTP intermediate. This is dCTP deaminase, dUMP-forming from Cytophaga hutchinsonii (strain ATCC 33406 / DSM 1761 / CIP 103989 / NBRC 15051 / NCIMB 9469 / D465).